The primary structure comprises 785 residues: Cation/H(+) antiporter 1 (785 aa).

A run of 12 helical transmembrane segments spans residues 19–39 (LNTM…FYLF), 44–64 (GQAG…LTII), 79–99 (YYIF…GLEI), 112–132 (IVIT…FLWF), 143–163 (FLTF…PVVI), 179–199 (LAIS…TIVL), 201–221 (FISG…GVII), 240–260 (YLSK…ALTI), 294–314 (YPIH…RFSV), 323–343 (LVLG…VLFA), 352–372 (QYWL…LVLL), and 389–409 (MFVA…SLLL).

The protein belongs to the monovalent cation:proton antiporter 2 (CPA2) transporter (TC 2.A.37) family. CHX (TC 2.A.37.4) subfamily. As to expression, specifically expressed in pollen.

The protein resides in the membrane. Functionally, may operate as a cation/H(+) antiporter. The chain is Cation/H(+) antiporter 1 (CHX1) from Arabidopsis thaliana (Mouse-ear cress).